The primary structure comprises 486 residues: Beta-barrel assembly-enhancing protease (486 aa).

Residues M1 to A19 form the signal peptide. A Zn(2+)-binding site is contributed by H134. The active site involves E135. Residues H138 and E199 each contribute to the Zn(2+) site. Catalysis depends on D203, which acts as the Proton donor.

Belongs to the peptidase M48 family. BepA subfamily. Zn(2+) is required as a cofactor.

The protein resides in the periplasm. Functions both as a chaperone and a metalloprotease. Maintains the integrity of the outer membrane by promoting either the assembly or the elimination of outer membrane proteins, depending on their folding state. This is Beta-barrel assembly-enhancing protease from Yersinia pestis.